A 60-amino-acid chain; its full sequence is Large ribosomal subunit protein uL30 (60 aa).

It belongs to the universal ribosomal protein uL30 family. As to quaternary structure, part of the 50S ribosomal subunit.

This Burkholderia ambifaria (strain MC40-6) protein is Large ribosomal subunit protein uL30.